We begin with the raw amino-acid sequence, 320 residues long: Aspartate carbamoyltransferase catalytic subunit (320 aa).

Residues R68 and T69 each contribute to the carbamoyl phosphate site. K96 lines the L-aspartate pocket. Carbamoyl phosphate-binding residues include R118, H148, and Q151. The L-aspartate site is built by R181 and R236. G277 and P278 together coordinate carbamoyl phosphate.

The protein belongs to the aspartate/ornithine carbamoyltransferase superfamily. ATCase family. Heterododecamer (2C3:3R2) of six catalytic PyrB chains organized as two trimers (C3), and six regulatory PyrI chains organized as three dimers (R2).

It catalyses the reaction carbamoyl phosphate + L-aspartate = N-carbamoyl-L-aspartate + phosphate + H(+). It functions in the pathway pyrimidine metabolism; UMP biosynthesis via de novo pathway; (S)-dihydroorotate from bicarbonate: step 2/3. Functionally, catalyzes the condensation of carbamoyl phosphate and aspartate to form carbamoyl aspartate and inorganic phosphate, the committed step in the de novo pyrimidine nucleotide biosynthesis pathway. The sequence is that of Aspartate carbamoyltransferase catalytic subunit from Delftia acidovorans (strain DSM 14801 / SPH-1).